The primary structure comprises 309 residues: Porphobilinogen deaminase (309 aa).

Position 242 is an S-(dipyrrolylmethanemethyl)cysteine (C242).

The protein belongs to the HMBS family. Monomer. Dipyrromethane is required as a cofactor.

The catalysed reaction is 4 porphobilinogen + H2O = hydroxymethylbilane + 4 NH4(+). It participates in porphyrin-containing compound metabolism; protoporphyrin-IX biosynthesis; coproporphyrinogen-III from 5-aminolevulinate: step 2/4. Functionally, tetrapolymerization of the monopyrrole PBG into the hydroxymethylbilane pre-uroporphyrinogen in several discrete steps. This is Porphobilinogen deaminase from Actinobacillus succinogenes (strain ATCC 55618 / DSM 22257 / CCUG 43843 / 130Z).